A 103-amino-acid chain; its full sequence is MQNQKIRIRLKAFDHRLIDQSAQEIVDTAKRTGAQVRGPIPLPTNRERYTVLISPHVNKDARDQYEIRTHKRVLDIVEPTEKTVDALMKLDLAAGVDVQIKLD.

The protein belongs to the universal ribosomal protein uS10 family. In terms of assembly, part of the 30S ribosomal subunit.

Functionally, involved in the binding of tRNA to the ribosomes. This Chromohalobacter salexigens (strain ATCC BAA-138 / DSM 3043 / CIP 106854 / NCIMB 13768 / 1H11) protein is Small ribosomal subunit protein uS10.